Reading from the N-terminus, the 339-residue chain is MEYIKFDKARKMDIVPIGRVAIDFNPIDINKPLSESSTFKKYLGGSPANIAVGLARLGKKIGFIGKVSKDQFGEFVVNYFDNEGIDTSQIKYSKNGENLGLTFTEIASPTESSILMYRQGIADLELNVDEIDEEYIKNTKAIVISGTALAKSPSREAALKALELAKRNNTVVIFDVDYRAYNWKNSDEIAIYYSIAGKQSDIIMGSREEFDLMEKLITREKNSDEETAKRWLDYGNKIVVIKHGKEGSTAYTSDGKSYNIKPFPVKLLKSFGGGDAYASAFLYGLLEGWSIIDSLEFGSASAAMLVASHSCSQDMPTVEAIRNFIKEEKEEYGDMVARA.

This sequence belongs to the carbohydrate kinase PfkB family.

The enzyme catalyses 5-dehydro-2-deoxy-D-gluconate + ATP = 6-phospho-5-dehydro-2-deoxy-D-gluconate + ADP + H(+). It participates in polyol metabolism; myo-inositol degradation into acetyl-CoA; acetyl-CoA from myo-inositol: step 5/7. In terms of biological role, catalyzes the phosphorylation of 5-dehydro-2-deoxy-D-gluconate (2-deoxy-5-keto-D-gluconate or DKG) to 6-phospho-5-dehydro-2-deoxy-D-gluconate (DKGP). In Clostridium beijerinckii (strain ATCC 51743 / NCIMB 8052) (Clostridium acetobutylicum), this protein is 5-dehydro-2-deoxygluconokinase.